Here is a 117-residue protein sequence, read N- to C-terminus: Putative iron-sulfur cluster insertion protein ErpA (117 aa).

3 residues coordinate iron-sulfur cluster: Cys45, Cys109, and Cys111.

The protein belongs to the HesB/IscA family. In terms of assembly, homodimer. Iron-sulfur cluster serves as cofactor.

Its function is as follows. Required for insertion of 4Fe-4S clusters. This is Putative iron-sulfur cluster insertion protein ErpA from Chromobacterium violaceum (strain ATCC 12472 / DSM 30191 / JCM 1249 / CCUG 213 / NBRC 12614 / NCIMB 9131 / NCTC 9757 / MK).